Consider the following 328-residue polypeptide: Nickel import system permease protein NikB (328 aa).

The next 6 helical transmembrane spans lie at 11 to 31, 104 to 124, 139 to 159, 170 to 190, 229 to 249, and 279 to 299; these read LMQM…LMKL, LLIS…LGII, VIST…LLFI, ILSQ…AYII, ILPI…GTVV, and VLFI…LTLL. Residues 100-297 form the ABC transmembrane type-1 domain; sequence APITLLISFS…IINTIADLLT (198 aa).

This sequence belongs to the binding-protein-dependent transport system permease family. OppBC subfamily. In terms of assembly, the complex is composed of two ATP-binding proteins (NikD and NikE), two transmembrane proteins (NikB and NikC) and a solute-binding protein (NikA).

It localises to the cell membrane. Functionally, part of the ABC transporter complex NikABCDE (Opp2) involved in nickel import. Probably responsible for the translocation of the substrate across the membrane. This Staphylococcus aureus (strain MSSA476) protein is Nickel import system permease protein NikB.